Here is a 372-residue protein sequence, read N- to C-terminus: Heat shock 70 kDa protein II (372 aa).

Belongs to the heat shock protein 70 family.

The protein is Heat shock 70 kDa protein II (HSP70II) of Paracentrotus lividus (Common sea urchin).